The following is a 318-amino-acid chain: MSNEYFDPKLKIFSLNSNRELAEEIAKEVGIELGKSSVTHFSDGEIQINIEESIRGCHVYVIQSTSNPVNQNLMELLIMIDALKRASAATINIVMPYYGYARQDRKARSREPITAKLVANLIETAGATRMITLDMHAPQIQGFFDIPIDHLNAVRLLSNYFGERHLGDDLVVVSPDHGGVTRARKMADRLKAPIAIIDKRRPRPNVAEVMNIVGNVEGKVCIIIDDIIDTAGTITLAAKALREAGATKVYACCSHPVLSGPAMKRIEESPIEKLVVTNSIALPEDKWIDKMEQLSVAPLLGEAIVRVHENASVSSLFE.

ATP is bound by residues 43-45 and 102-103; these read DGE and RQ. The Mg(2+) site is built by H136 and D176. Residue K199 is part of the active site. D-ribose 5-phosphate is bound by residues R201, D225, and 229–233; that span reads DTAGT.

The protein belongs to the ribose-phosphate pyrophosphokinase family. Class I subfamily. As to quaternary structure, homohexamer. It depends on Mg(2+) as a cofactor.

Its subcellular location is the cytoplasm. It carries out the reaction D-ribose 5-phosphate + ATP = 5-phospho-alpha-D-ribose 1-diphosphate + AMP + H(+). The protein operates within metabolic intermediate biosynthesis; 5-phospho-alpha-D-ribose 1-diphosphate biosynthesis; 5-phospho-alpha-D-ribose 1-diphosphate from D-ribose 5-phosphate (route I): step 1/1. Functionally, involved in the biosynthesis of the central metabolite phospho-alpha-D-ribosyl-1-pyrophosphate (PRPP) via the transfer of pyrophosphoryl group from ATP to 1-hydroxyl of ribose-5-phosphate (Rib-5-P). The sequence is that of Ribose-phosphate pyrophosphokinase from Listeria ivanovii.